We begin with the raw amino-acid sequence, 330 residues long: GMP reductase (330 aa).

Cysteine 180 functions as the Thioimidate intermediate in the catalytic mechanism. 209–232 (LIADGGIRHNGDIAKSVRFGASMV) lines the NADP(+) pocket.

The protein belongs to the IMPDH/GMPR family. GuaC type 2 subfamily.

The catalysed reaction is IMP + NH4(+) + NADP(+) = GMP + NADPH + 2 H(+). In terms of biological role, catalyzes the irreversible NADPH-dependent deamination of GMP to IMP. It functions in the conversion of nucleobase, nucleoside and nucleotide derivatives of G to A nucleotides, and in maintaining the intracellular balance of A and G nucleotides. The protein is GMP reductase of Lactobacillus acidophilus (strain ATCC 700396 / NCK56 / N2 / NCFM).